We begin with the raw amino-acid sequence, 435 residues long: AP-2 complex subunit mu (435 aa).

A Phosphoserine modification is found at serine 45. The residue at position 156 (threonine 156) is a Phosphothreonine. The MHD domain occupies 170–434 (RNELFLDVLE…IGRSGIYETR (265 aa)). 3 residues coordinate a 1,2-diacyl-sn-glycero-3-phospho-(1D-myo-inositol-3,4,5-trisphosphate): lysine 341, lysine 345, and lysine 354.

The protein belongs to the adaptor complexes medium subunit family. In terms of assembly, adaptor protein complex 2 (AP-2) is a heterotetramer composed of two large adaptins (alpha-type subunit AP2A1 or AP2A2 and beta-type subunit AP2B1), a medium adaptin (mu-type subunit AP2M1) and a small adaptin (sigma-type subunit AP2S1). Interacts with ATP6V1H and MEGF10. Interacts with EGFR and TTGN1. Interacts with F2R. Interacts with PIP5K1C; tyrosine phosphorylation of PIP5K1C weakens the interaction. Interacts with KIAA0319; required for clathrin-mediated endocytosis of KIAA0319. Interacts with DVL2 (via DEP domain). Interacts with KCNQ1; mediates estrogen-induced internalization via clathrin-coated vesicles. Interacts with P2RX4 (via internalization motif). Together with AP2A1 or AP2A2 and AP2B1, it interacts with ADAM10; this interaction facilitates ADAM10 endocytosis from the plasma membrane during long-term potentiation in hippocampal neurons. Probably interacts with ACE2 (via endocytic sorting signal motif); the interaction is inhibited by ACE2 phosphorylation. Interacts with RALBP1; the interaction is direct. Interacts with TMEM106B (via N-terminus). Phosphorylation at Thr-156 increases the affinity of the AP-2 complex for cargo membrane proteins during the initial stages of endocytosis.

The protein resides in the cell membrane. The protein localises to the membrane. It is found in the coated pit. Its function is as follows. Component of the adaptor protein complex 2 (AP-2). Adaptor protein complexes function in protein transport via transport vesicles in different membrane traffic pathways. Adaptor protein complexes are vesicle coat components and appear to be involved in cargo selection and vesicle formation. AP-2 is involved in clathrin-dependent endocytosis in which cargo proteins are incorporated into vesicles surrounded by clathrin (clathrin-coated vesicles, CCVs) which are destined for fusion with the early endosome. The clathrin lattice serves as a mechanical scaffold but is itself unable to bind directly to membrane components. Clathrin-associated adaptor protein (AP) complexes which can bind directly to both the clathrin lattice and to the lipid and protein components of membranes are considered to be the major clathrin adaptors contributing the CCV formation. AP-2 also serves as a cargo receptor to selectively sort the membrane proteins involved in receptor-mediated endocytosis. AP-2 seems to play a role in the recycling of synaptic vesicle membranes from the presynaptic surface. AP-2 recognizes Y-X-X-[FILMV] (Y-X-X-Phi) and [ED]-X-X-X-L-[LI] endocytosis signal motifs within the cytosolic tails of transmembrane cargo molecules. AP-2 may also play a role in maintaining normal post-endocytic trafficking through the ARF6-regulated, non-clathrin pathway. During long-term potentiation in hippocampal neurons, AP-2 is responsible for the endocytosis of ADAM10. The AP-2 mu subunit binds to transmembrane cargo proteins; it recognizes the Y-X-X-Phi motifs. The surface region interacting with to the Y-X-X-Phi motif is inaccessible in cytosolic AP-2, but becomes accessible through a conformational change following phosphorylation of AP-2 mu subunit at Thr-156 in membrane-associated AP-2. The membrane-specific phosphorylation event appears to involve assembled clathrin which activates the AP-2 mu kinase AAK1. Plays a role in endocytosis of frizzled family members upon Wnt signaling. The chain is AP-2 complex subunit mu (AP2M1) from Bos taurus (Bovine).